Here is a 554-residue protein sequence, read N- to C-terminus: Acetyl-S-ACP:malonate ACP transferase (554 aa).

The protein localises to the cytoplasm. The enzyme catalyses acetyl-[ACP] + malonate = malonyl-[ACP] + acetate. In terms of biological role, alpha subunit of the biotin-independent and biotin-dependent malonate decarboxylase multienzyme complex (EC 4.1.1.88 and EC 7.2.4.4, respectively). Acts as an acyl-carrier protein (ACP) transferase component. This first step in malonate decarboxylation involves the exchange of an acetyl thioester residue bound to the activated ACP subunit for a malonyl thioester residue. Has a weak activity with acetyl-CoA as substrate. The sequence is that of Acetyl-S-ACP:malonate ACP transferase (madA) from Malonomonas rubra.